The following is a 225-amino-acid chain: Ribonuclease 3 (225 aa).

The RNase III domain maps to 7–129 (MPRLCRTLGY…IIGAVYIDSG (123 aa)). Mg(2+) is bound at residue Glu-42. Residue Asp-46 is part of the active site. Residues Asp-115 and Glu-118 each coordinate Mg(2+). Residue Glu-118 is part of the active site. The DRBM domain occupies 155–225 (DPKTLLQELL…AADALELMKR (71 aa)).

Belongs to the ribonuclease III family. As to quaternary structure, homodimer. Mg(2+) is required as a cofactor.

It localises to the cytoplasm. The enzyme catalyses Endonucleolytic cleavage to 5'-phosphomonoester.. Its function is as follows. Digests double-stranded RNA. Involved in the processing of primary rRNA transcript to yield the immediate precursors to the large and small rRNAs (23S and 16S). Processes some mRNAs, and tRNAs when they are encoded in the rRNA operon. Processes pre-crRNA and tracrRNA of type II CRISPR loci if present in the organism. This is Ribonuclease 3 from Shewanella sediminis (strain HAW-EB3).